A 278-amino-acid polypeptide reads, in one-letter code: Elongation factor Ts (278 aa).

Residues 80-83 are involved in Mg(2+) ion dislocation from EF-Tu; that stretch reads TDFV.

The protein belongs to the EF-Ts family.

It is found in the cytoplasm. In terms of biological role, associates with the EF-Tu.GDP complex and induces the exchange of GDP to GTP. It remains bound to the aminoacyl-tRNA.EF-Tu.GTP complex up to the GTP hydrolysis stage on the ribosome. This is Elongation factor Ts from Pseudarthrobacter chlorophenolicus (strain ATCC 700700 / DSM 12829 / CIP 107037 / JCM 12360 / KCTC 9906 / NCIMB 13794 / A6) (Arthrobacter chlorophenolicus).